Here is a 540-residue protein sequence, read N- to C-terminus: 2-isopropylmalate synthase (540 aa).

In terms of domain architecture, Pyruvate carboxyltransferase spans Val8–Thr273. Asp17, His208, His210, and Asn244 together coordinate Mn(2+). The interval Gln408–His540 is regulatory domain.

Belongs to the alpha-IPM synthase/homocitrate synthase family. LeuA type 1 subfamily. Homodimer. Mn(2+) serves as cofactor.

It is found in the cytoplasm. It catalyses the reaction 3-methyl-2-oxobutanoate + acetyl-CoA + H2O = (2S)-2-isopropylmalate + CoA + H(+). Its pathway is amino-acid biosynthesis; L-leucine biosynthesis; L-leucine from 3-methyl-2-oxobutanoate: step 1/4. Functionally, catalyzes the condensation of the acetyl group of acetyl-CoA with 3-methyl-2-oxobutanoate (2-ketoisovalerate) to form 3-carboxy-3-hydroxy-4-methylpentanoate (2-isopropylmalate). The sequence is that of 2-isopropylmalate synthase from Synechococcus sp. (strain CC9311).